The chain runs to 169 residues: Probable phospholipid hydroperoxide glutathione peroxidase (169 aa).

Residue Cys43 is part of the active site.

The protein belongs to the glutathione peroxidase family. Germinating seed, apex, flower, as well as in stressed tissues.

Its subcellular location is the cytoplasm. The catalysed reaction is a hydroperoxy polyunsaturated fatty acid + 2 glutathione = a hydroxy polyunsaturated fatty acid + glutathione disulfide + H2O. In terms of biological role, protects cells and enzymes from oxidative damage, by catalyzing the reduction of hydrogen peroxide, lipid peroxides and organic hydroperoxide, by glutathione. The protein is Probable phospholipid hydroperoxide glutathione peroxidase of Nicotiana sylvestris (Wood tobacco).